The sequence spans 68 residues: DNA-directed RNA polymerase subunit omega (68 aa).

The protein belongs to the RNA polymerase subunit omega family. As to quaternary structure, the RNAP catalytic core consists of 2 alpha, 1 beta, 1 beta' and 1 omega subunit. When a sigma factor is associated with the core the holoenzyme is formed, which can initiate transcription.

The catalysed reaction is RNA(n) + a ribonucleoside 5'-triphosphate = RNA(n+1) + diphosphate. Promotes RNA polymerase assembly. Latches the N- and C-terminal regions of the beta' subunit thereby facilitating its interaction with the beta and alpha subunits. This is DNA-directed RNA polymerase subunit omega from Trichlorobacter lovleyi (strain ATCC BAA-1151 / DSM 17278 / SZ) (Geobacter lovleyi).